Consider the following 502-residue polypeptide: Peroxisomal catalase (502 aa).

Active-site residues include histidine 64 and asparagine 137. Tyrosine 347 contributes to the heme binding site. A Microbody targeting signal motif is present at residues 500-502 (AKM).

The protein belongs to the catalase family. The cofactor is heme.

It localises to the peroxisome matrix. The enzyme catalyses 2 H2O2 = O2 + 2 H2O. Its function is as follows. Catalyzes the degradation of hydrogen peroxide (H(2)O(2)) generated by peroxisomal oxidases to water and oxygen, thereby protecting cells from the toxic effects of hydrogen peroxide. This chain is Peroxisomal catalase, found in Toxoplasma gondii.